Reading from the N-terminus, the 370-residue chain is Psilocybin cluster transcription regulator (370 aa).

Disordered stretches follow at residues 1–39 (MAPT…ADIS) and 102–221 (YQTG…RRRR). The segment covering 143-152 (IQHQDQQQSG) has biased composition (polar residues). Over residues 183–202 (TSTSTPSGGRRGGRSATMGS) the composition is skewed to low complexity. Positions 204-218 (EWSRQRKDNHKEVER) are enriched in basic and acidic residues. The interval 208 to 221 (QRKDNHKEVERRRR) is basic motif. Positions 208 to 258 (QRKDNHKEVERRRRGNINEGINELGRIVPSGSGEKAKGAILSRAVQYIHHL) constitute a bHLH domain. The tract at residues 222–258 (GNINEGINELGRIVPSGSGEKAKGAILSRAVQYIHHL) is helix-loop-helix motif. The segment at 317 to 370 (VSTAGAGSGAAKDESAAGTKRRSTDGADAAGTNVEGGNNDNAEGERDGKRQRTE) is disordered. A compositionally biased stretch (basic and acidic residues) spans 359-370 (EGERDGKRQRTE).

The protein resides in the nucleus. In terms of biological role, transcription factor that may regulate the expression of the gene cluster that mediates the biosynthesis of psilocybin, a psychotropic tryptamine-derived natural product. In Psilocybe cyanescens, this protein is Psilocybin cluster transcription regulator.